A 108-amino-acid chain; its full sequence is Nucleoid-associated protein Bphyt_1827 (108 aa).

The disordered stretch occupies residues 87–108 (AQEKMGGMTSGLPLPPGFKLPF). Over residues 99-108 (PLPPGFKLPF) the composition is skewed to pro residues.

This sequence belongs to the YbaB/EbfC family. Homodimer.

The protein localises to the cytoplasm. The protein resides in the nucleoid. Binds to DNA and alters its conformation. May be involved in regulation of gene expression, nucleoid organization and DNA protection. This Paraburkholderia phytofirmans (strain DSM 17436 / LMG 22146 / PsJN) (Burkholderia phytofirmans) protein is Nucleoid-associated protein Bphyt_1827.